An 82-amino-acid chain; its full sequence is Putative membrane protein insertion efficiency factor (82 aa).

Belongs to the UPF0161 family.

It is found in the cell inner membrane. In terms of biological role, could be involved in insertion of integral membrane proteins into the membrane. The protein is Putative membrane protein insertion efficiency factor of Rickettsia typhi (strain ATCC VR-144 / Wilmington).